The sequence spans 761 residues: RNA-binding protein mde7 (761 aa).

Polar residues-rich tracts occupy residues 31–46 (PNHS…NSLL), 58–83 (SRNS…TTPF), and 99–110 (SRNNSYLQGTAE). 2 disordered regions span residues 31–110 (PNHS…GTAE) and 188–213 (HYFD…EASN). A compositionally biased stretch (basic and acidic residues) spans 188–197 (HYFDDTDKSV). The segment covering 199 to 211 (SKSSSGSNSLSEA) has biased composition (low complexity). The 67-residue stretch at 223–289 (IVGGLPDDFD…SSTNNFTIIQ (67 aa)) folds into the RRM 1 domain. Over residues 442 to 466 (ESNSLSNQPNNFAQTSFDYQPNHPN) the composition is skewed to polar residues. The tract at residues 442-468 (ESNSLSNQPNNFAQTSFDYQPNHPNAI) is disordered. The region spanning 602–679 (NTIYVGNLSN…GGIRLSYSKN (78 aa)) is the RRM 2 domain.

The protein is RNA-binding protein mde7 (mde7) of Schizosaccharomyces pombe (strain 972 / ATCC 24843) (Fission yeast).